The sequence spans 432 residues: Homogentisate 1,2-dioxygenase (432 aa).

Catalysis depends on histidine 286, which acts as the Proton acceptor. Residues histidine 329 and glutamate 335 each contribute to the Fe cation site. Residues tyrosine 344 and histidine 365 each contribute to the homogentisate site. A Fe cation-binding site is contributed by histidine 365.

It belongs to the homogentisate dioxygenase family. As to quaternary structure, hexamer; dimer of trimers. The cofactor is Fe cation.

It carries out the reaction homogentisate + O2 = 4-maleylacetoacetate + H(+). It participates in amino-acid degradation; L-phenylalanine degradation; acetoacetate and fumarate from L-phenylalanine: step 4/6. Involved in the catabolism of homogentisate (2,5-dihydroxyphenylacetate or 2,5-OH-PhAc), a central intermediate in the degradation of phenylalanine and tyrosine. Catalyzes the oxidative ring cleavage of the aromatic ring of homogentisate to yield maleylacetoacetate. The polypeptide is Homogentisate 1,2-dioxygenase (Bordetella bronchiseptica (strain ATCC BAA-588 / NCTC 13252 / RB50) (Alcaligenes bronchisepticus)).